We begin with the raw amino-acid sequence, 1033 residues long: Kinesin-like protein KIN-4A (1033 aa).

In terms of domain architecture, Kinesin motor spans 11–366 (CVKVAVHVRP…LKYANRARNI (356 aa)). 89–96 (GQTGSGKT) provides a ligand contact to ATP. Residues 443-462 (QDGSPCSVESDGLKRNLRSR) form a disordered region. A compositionally biased stretch (basic and acidic residues) spans 453-462 (DGLKRNLRSR). A coiled-coil region spans residues 525–638 (ALKQHFGKKI…IKQEAEQFRQ (114 aa)). Positions 763–785 (DELDSKGPSPSRGKNGCARGSSL) are disordered. A coiled-coil region spans residues 863 to 895 (IEIREMKEQLKELVGLLRQSELQRKEVENELKL).

The protein belongs to the TRAFAC class myosin-kinesin ATPase superfamily. Kinesin family. KIN-4 subfamily. In terms of assembly, homodimer. In terms of tissue distribution, expressed in cotton fibers.

It localises to the cytoplasm. Functionally, kinesin-like motor protein involved in the control of the oriented deposition of cellulose microfibrils. The sequence is that of Kinesin-like protein KIN-4A from Gossypium hirsutum (Upland cotton).